The primary structure comprises 745 residues: Cytoplasmic polyadenylation element-binding protein 3 (745 aa).

Disordered stretches follow at residues 1 to 45 (MNLN…KSPT), 94 to 180 (VGSK…TNNS), and 204 to 283 (NKAN…FGEL). The segment covering 162–175 (LNFERDAEQKKDST) has biased composition (basic and acidic residues). Residues 219–229 (ETPTDSPQKGF) are compositionally biased toward polar residues. The span at 230-240 (SSSTESSPSDS) shows a compositional bias: low complexity. Polar residues predominate over residues 241–255 (MNQFPSREHFTSANE). The segment covering 264 to 276 (FQQEHGNKNRDSD) has biased composition (basic and acidic residues). One can recognise an RRM domain in the interval 297 to 319 (IFVGGVPWDITEAALKDSFGEFG).

In terms of biological role, cytoplasmic polyadenylation element binding protein that binds to and regulates the translation of specific mRNAs. May not be required for oogenesis. In Caenorhabditis elegans, this protein is Cytoplasmic polyadenylation element-binding protein 3 (cpb-3).